The primary structure comprises 559 residues: T-complex protein 1 subunit gamma (559 aa).

Cys368 and Cys374 are disulfide-bonded. Positions Lys531 to Gly559 are disordered.

This sequence belongs to the TCP-1 chaperonin family. Heterooligomeric complex of about 850 to 900 kDa that forms two stacked rings, 12 to 16 nm in diameter.

Its subcellular location is the cytoplasm. Functionally, molecular chaperone; assists the folding of proteins upon ATP hydrolysis. Known to play a role, in vitro, in the folding of actin and tubulin. The sequence is that of T-complex protein 1 subunit gamma from Oxytricha granulifera (Ciliate).